A 153-amino-acid chain; its full sequence is MTPVRSSSLSLLLLLSLVALVKAGIMIPQSPGCPKTEDKNFPQHVRVNLNILNRSTPARRPSDYSKRFTSPWTLQRNEDPERYSSVIWEAKCSHSGCINAEGKEDHHMNSVPIQQEILVLRREPRHCPNSFRLEKVMVTVGCTCVTPIVRHIS.

Residues 1–23 form the signal peptide; that stretch reads MTPVRSSSLSLLLLLSLVALVKA. N-linked (GlcNAc...) asparagine glycosylation occurs at Asn-53. Disulfide bonds link Cys-92/Cys-142 and Cys-97/Cys-144.

This sequence belongs to the IL-17 family. Homodimer. Forms complexes with IL17RA and IL17RC receptors with 2:1 binding stoichiometry: two receptor chains for one interleukin molecule. IL17A homodimer preferentially drives the formation of IL17RA-IL17RC heterodimeric receptor complex. IL17A homodimer adopts an asymmetrical ternary structure with one IL17RA molecule, allowing for high affinity interactions of one IL17A monomer with one IL17RA molecule (via D1 and D2 domains), while disfavoring binding of a second IL17RA molecule on the other IL17A monomer. Heterodimer with IL17F. IL17A-IL17F forms complexes with IL17RA-IL17RC, but with lower affinity when compared to IL17A homodimer. IL17RA and IL17RC chains cannot distinguish between IL17A and IL17F molecules, potentially enabling the formation of topologically distinct complexes. Highly expressed in adult heart, skin, and intestinal tissues, such as jejunum and ileum.

The protein resides in the secreted. Its function is as follows. Effector cytokine of innate and adaptive immune system involved in antimicrobial host defense and maintenance of tissue integrity. Signals via IL17RA-IL17RC heterodimeric receptor complex, triggering homotypic interaction of IL17RA and IL17RC chains with TRAF3IP2 adapter. This leads to downstream TRAF6-mediated activation of NF-kappa-B and MAPkinase pathways ultimately resulting in transcriptional activation of cytokines, chemokines, antimicrobial peptides and matrix metalloproteinases, with potential strong immune inflammation. Plays an important role in connecting T cell-mediated adaptive immunity and acute inflammatory response to destroy extracellular bacteria and fungi. As a signature effector cytokine of T-helper 17 cells (Th17), primarily induces neutrophil activation and recruitment at infection and inflammatory sites. In airway epithelium, mediates neutrophil chemotaxis via induction of CXCL1 and CXCL5 chemokines. In secondary lymphoid organs, contributes to germinal center formation by regulating the chemotactic response of B cells to CXCL12 and CXCL13, enhancing retention of B cells within the germinal centers, B cell somatic hypermutation rate and selection toward plasma cells. Effector cytokine of a subset of gamma-delta T cells that functions as part of an inflammatory circuit downstream IL1B, TLR2 and IL23A-IL12B to promote neutrophil recruitment for efficient bacterial clearance. Effector cytokine of innate immune cells including invariant natural killer cell (iNKT) and group 3 innate lymphoid cells that mediate initial neutrophilic inflammation. Involved in the maintenance of the integrity of epithelial barriers during homeostasis and pathogen infection. Upon acute injury, has a direct role in epithelial barrier formation by regulating OCLN localization and tight junction biogenesis. As part of the mucosal immune response induced by commensal bacteria, enhances host's ability to resist pathogenic bacterial and fungal infections by promoting neutrophil recruitment and antimicrobial peptides release. In synergy with IL17F, mediates the production of antimicrobial beta-defensins DEFB1, DEFB103A, and DEFB104A by mucosal epithelial cells, limiting the entry of microbes through the epithelial barriers. Involved in antiviral host defense through various mechanisms. Enhances immunity against West Nile virus by promoting T cell cytotoxicity. May play a beneficial role in influenza A virus (H5N1) infection by enhancing B cell recruitment and immune response in the lung. Contributes to influenza A virus (H1N1) clearance by driving the differentiation of B-1a B cells, providing for production of virus-specific IgM antibodies at first line of host defense. The sequence is that of Interleukin-17A (IL17A) from Sus scrofa (Pig).